A 442-amino-acid chain; its full sequence is tRNA modification GTPase MnmE (442 aa).

Residues Arg27, Glu84, and Lys124 each contribute to the (6S)-5-formyl-5,6,7,8-tetrahydrofolate site. One can recognise a TrmE-type G domain in the interval 221-366 (GLHVVIVGAP…LLDALQAFAE (146 aa)). Residues 231-236 (NAGKSS), 250-256 (SEEAGTT), and 275-278 (DTAG) contribute to the GTP site. Mg(2+)-binding residues include Ser235 and Thr256. Lys442 is a binding site for (6S)-5-formyl-5,6,7,8-tetrahydrofolate.

It belongs to the TRAFAC class TrmE-Era-EngA-EngB-Septin-like GTPase superfamily. TrmE GTPase family. As to quaternary structure, homodimer. Heterotetramer of two MnmE and two MnmG subunits. It depends on K(+) as a cofactor.

The protein localises to the cytoplasm. Exhibits a very high intrinsic GTPase hydrolysis rate. Involved in the addition of a carboxymethylaminomethyl (cmnm) group at the wobble position (U34) of certain tRNAs, forming tRNA-cmnm(5)s(2)U34. This chain is tRNA modification GTPase MnmE, found in Brucella ovis (strain ATCC 25840 / 63/290 / NCTC 10512).